The sequence spans 180 residues: Minor allergen Can f 2 (180 aa).

Positions 1–18 (MQLLLLTVGLALICGLQA) are cleaved as a signal peptide. Residue asparagine 45 is glycosylated (N-linked (GlcNAc...) asparagine). A disulfide bridge links cysteine 82 with cysteine 175.

The protein belongs to the calycin superfamily. Lipocalin family. Tongue epithelial tissue and parotid gland.

Its subcellular location is the secreted. The sequence is that of Minor allergen Can f 2 from Canis lupus familiaris (Dog).